Reading from the N-terminus, the 1141-residue chain is Myosin-binding protein C, fast-type (1141 aa).

Residues 1–62 form a disordered region; it reads MPEAKPAAKK…VFLKKPDSVS (62 aa). Residues 13 to 39 show a composition bias toward basic and acidic residues; sequence KGKDAPKGAPKEAPPKEAPAEAPKEAP. Ig-like C2-type domains follow at residues 50–153, 255–344, 345–437, 438–538, and 539–638; these read PTGV…NIDV, SAAF…VKEP, PVLI…VEEK, QLEV…KQEP, and PKIH…VVDV. Fibronectin type-III domains follow at residues 641–737 and 739–834; these read PPEA…IAPT and EPLH…IREI. One can recognise an Ig-like C2-type 6 domain in the interval 838–932; the sequence is PKIRLPRHLR…ATIRIRVVEK (95 aa). A Fibronectin type-III 3 domain is found at 935–1030; it reads PPINVMVKEV…SKNTARILKT (96 aa). Positions 1048–1141 constitute an Ig-like C2-type 7 domain; that stretch reads PKFLTPLIDR…ECKLEVRVPQ (94 aa).

Belongs to the immunoglobulin superfamily. MyBP family.

Thick filament-associated protein located in the crossbridge region of vertebrate striated muscle a bands. In vitro it binds MHC, F-actin and native thin filaments, and modifies the activity of actin-activated myosin ATPase. It may modulate muscle contraction or may play a more structural role. The polypeptide is Myosin-binding protein C, fast-type (MYBPC2) (Homo sapiens (Human)).